The following is a 291-amino-acid chain: Protease HtpX homolog (291 aa).

2 consecutive transmembrane segments (helical) span residues 4-24 (IVLFLATNLAIVLVLSLTMRL) and 39-59 (TSLLIFAAVMGFGGSLISLAI). Histidine 145 contributes to the Zn(2+) binding site. The active site involves glutamate 146. A Zn(2+)-binding site is contributed by histidine 149. Helical transmembrane passes span 156–176 (VTLALIQGVVNTFVMFLSRII) and 195–215 (FFVTMIVAELVLGILASIIVM). Glutamate 222 is a binding site for Zn(2+).

It belongs to the peptidase M48B family. Zn(2+) is required as a cofactor.

Its subcellular location is the cell inner membrane. In Thiobacillus denitrificans (strain ATCC 25259 / T1), this protein is Protease HtpX homolog.